The sequence spans 351 residues: Translation initiation factor eIF2B subunit beta (351 aa).

Belongs to the eIF-2B alpha/beta/delta subunits family. As to quaternary structure, component of the translation initiation factor 2B (eIF2B) complex which is a heterodecamer of two sets of five different subunits: alpha, beta, gamma, delta and epsilon. Subunits alpha, beta and delta comprise a regulatory subcomplex and subunits epsilon and gamma comprise a catalytic subcomplex. Within the complex, the hexameric regulatory complex resides at the center, with the two heterodimeric catalytic subcomplexes bound on opposite sides.

It localises to the cytoplasm. The protein localises to the cytosol. With respect to regulation, activated by the chemical integrated stress response (ISR) inhibitor ISRIB which stimulates guanine nucleotide exchange factor activity for both phosphorylated and unphosphorylated eIF2. Its function is as follows. Acts as a component of the translation initiation factor 2B (eIF2B) complex, which catalyzes the exchange of GDP for GTP on eukaryotic initiation factor 2 (eIF2) gamma subunit. Its guanine nucleotide exchange factor activity is repressed when bound to eIF2 complex phosphorylated on the alpha subunit, thereby limiting the amount of methionyl-initiator methionine tRNA available to the ribosome and consequently global translation is repressed. This is Translation initiation factor eIF2B subunit beta (Eif2b2) from Mus musculus (Mouse).